Reading from the N-terminus, the 734-residue chain is Photosystem I P700 chlorophyll a apoprotein A2 (734 aa).

8 helical membrane-spanning segments follow: residues Ile46–Ala69, Leu135–Gln158, Leu175–Ile199, Met273–Tyr291, Leu330–Tyr353, Ala369–Ile395, Ala417–His439, and Phe517–Val535. The [4Fe-4S] cluster site is built by Cys559 and Cys568. The next 2 membrane-spanning stretches (helical) occupy residues Ala575 to Trp596 and Leu643 to Ile665. His654, Met662, and Tyr670 together coordinate chlorophyll a. Phylloquinone is bound at residue Trp671. Residues Leu707–Ala727 form a helical membrane-spanning segment.

The protein belongs to the PsaA/PsaB family. As to quaternary structure, the PsaA/B heterodimer binds the P700 chlorophyll special pair and subsequent electron acceptors. PSI consists of a core antenna complex that captures photons, and an electron transfer chain that converts photonic excitation into a charge separation. The eukaryotic PSI reaction center is composed of at least 11 subunits. The cofactor is P700 is a chlorophyll a/chlorophyll a' dimer, A0 is one or more chlorophyll a, A1 is one or both phylloquinones and FX is a shared 4Fe-4S iron-sulfur center..

Its subcellular location is the plastid. The protein localises to the chloroplast thylakoid membrane. The enzyme catalyses reduced [plastocyanin] + hnu + oxidized [2Fe-2S]-[ferredoxin] = oxidized [plastocyanin] + reduced [2Fe-2S]-[ferredoxin]. In terms of biological role, psaA and PsaB bind P700, the primary electron donor of photosystem I (PSI), as well as the electron acceptors A0, A1 and FX. PSI is a plastocyanin-ferredoxin oxidoreductase, converting photonic excitation into a charge separation, which transfers an electron from the donor P700 chlorophyll pair to the spectroscopically characterized acceptors A0, A1, FX, FA and FB in turn. Oxidized P700 is reduced on the lumenal side of the thylakoid membrane by plastocyanin. This chain is Photosystem I P700 chlorophyll a apoprotein A2, found in Pinus thunbergii (Japanese black pine).